A 517-amino-acid chain; its full sequence is Putative thymidine phosphorylase (517 aa).

This sequence belongs to the thymidine/pyrimidine-nucleoside phosphorylase family. Type 2 subfamily.

It catalyses the reaction thymidine + phosphate = 2-deoxy-alpha-D-ribose 1-phosphate + thymine. The protein is Putative thymidine phosphorylase of Legionella pneumophila subsp. pneumophila (strain Philadelphia 1 / ATCC 33152 / DSM 7513).